Consider the following 650-residue polypeptide: Acetoacetyl-coenzyme A synthetase (650 aa).

199–202 contacts CoA; the sequence is YNGK. ATP-binding positions include 392–394, D504, R519, and R530; that span reads GSP. Mg(2+) is bound at residue V546. R587 contacts CoA. K612 carries the post-translational modification N6-acetyllysine.

Belongs to the ATP-dependent AMP-binding enzyme family. Requires Mg(2+) as cofactor. Post-translationally, acetylated. Deacetylation by the SIR2-homolog deacetylase activates the enzyme.

It carries out the reaction acetoacetate + ATP + CoA = acetoacetyl-CoA + AMP + diphosphate. It functions in the pathway biopolymer metabolism; poly-(R)-3-hydroxybutanoate degradation. In terms of biological role, catalyzes the conversion of acetoacetate into acetoacetyl-CoA. Is involved in poly-3-hydroxybutyrate (PHB) degradation, which allows growth of R.meliloti on PHB cycle intermediates. This Rhizobium meliloti (strain 1021) (Ensifer meliloti) protein is Acetoacetyl-coenzyme A synthetase.